We begin with the raw amino-acid sequence, 350 residues long: Protein RecA (350 aa).

66–73 provides a ligand contact to ATP; it reads GPESSGKT.

Belongs to the RecA family.

The protein resides in the cytoplasm. Functionally, can catalyze the hydrolysis of ATP in the presence of single-stranded DNA, the ATP-dependent uptake of single-stranded DNA by duplex DNA, and the ATP-dependent hybridization of homologous single-stranded DNAs. It interacts with LexA causing its activation and leading to its autocatalytic cleavage. This Nocardioides sp. (strain ATCC BAA-499 / JS614) protein is Protein RecA.